Consider the following 837-residue polypeptide: CoA-transferase/lyase DddD (837 aa).

The Nucleophile role is filled by Asp602.

Belongs to the CoA-transferase III family.

In terms of biological role, dimethyl sulfide (DMS)-producing enzyme. Acts both as a transferase and a lyase: uses acetyl-coenzyme A (acetyl-coA) and dimethylsulfoniopropionate (DMSP) as substrates to produce DMS, acetate and 3-hydroxypropionate-CoA (3HP-CoA). Mediates the CoA-transferase prior to lyase activity. DMS is the principal form by which sulfur is transported from oceans to the atmosphere and is a key component of the ocean sulfur cycle. In Marinomonas sp. (strain MWYL1), this protein is CoA-transferase/lyase DddD.